We begin with the raw amino-acid sequence, 269 residues long: Tryptophan synthase alpha chain (269 aa).

Catalysis depends on proton acceptor residues E49 and D60.

Belongs to the TrpA family. As to quaternary structure, tetramer of two alpha and two beta chains.

It carries out the reaction (1S,2R)-1-C-(indol-3-yl)glycerol 3-phosphate + L-serine = D-glyceraldehyde 3-phosphate + L-tryptophan + H2O. It functions in the pathway amino-acid biosynthesis; L-tryptophan biosynthesis; L-tryptophan from chorismate: step 5/5. Its function is as follows. The alpha subunit is responsible for the aldol cleavage of indoleglycerol phosphate to indole and glyceraldehyde 3-phosphate. In Proteus mirabilis (strain HI4320), this protein is Tryptophan synthase alpha chain.